Reading from the N-terminus, the 197-residue chain is Rac-like GTP-binding protein RHO1 (197 aa).

13–20 is a binding site for GTP; it reads GDGAVGKT. An Effector region motif is present at residues 35–43; that stretch reads YVPTVFDNF. Residues 60 to 64 and 118 to 121 each bind GTP; these read DTAGQ and TKLD. Cysteine 194 carries the cysteine methyl ester modification. Cysteine 194 carries the S-geranylgeranyl cysteine lipid modification. The propeptide at 195 to 197 is removed in mature form; the sequence is SIL.

It belongs to the small GTPase superfamily. Rho family. Expressed at the tip of pollen tubes.

The protein resides in the cytoplasm. It localises to the membrane. Functionally, inactive GDP-bound Rho GTPases reside in the cytosol, are found in a complex with Rho GDP-dissociation inhibitors (Rho GDIs), and are released from the GDI protein in order to translocate to membranes upon activation. May be involved in cell polarity control during the actin-dependent tip growth of pollen tubes. The protein is Rac-like GTP-binding protein RHO1 (RHO1) of Pisum sativum (Garden pea).